We begin with the raw amino-acid sequence, 107 residues long: UPF0145 protein TT_C0892 (107 aa).

This sequence belongs to the UPF0145 family.

The sequence is that of UPF0145 protein TT_C0892 from Thermus thermophilus (strain ATCC BAA-163 / DSM 7039 / HB27).